The following is a 312-amino-acid chain: Acetyl-coenzyme A carboxylase carboxyl transferase subunit alpha (312 aa).

Positions 36 to 286 (RLDKEVKSIY…KEYFLDALRT (251 aa)) constitute a CoA carboxyltransferase C-terminal domain.

The protein belongs to the AccA family. In terms of assembly, acetyl-CoA carboxylase is a heterohexamer composed of biotin carboxyl carrier protein (AccB), biotin carboxylase (AccC) and two subunits each of ACCase subunit alpha (AccA) and ACCase subunit beta (AccD).

The protein localises to the cytoplasm. The catalysed reaction is N(6)-carboxybiotinyl-L-lysyl-[protein] + acetyl-CoA = N(6)-biotinyl-L-lysyl-[protein] + malonyl-CoA. It functions in the pathway lipid metabolism; malonyl-CoA biosynthesis; malonyl-CoA from acetyl-CoA: step 1/1. In terms of biological role, component of the acetyl coenzyme A carboxylase (ACC) complex. First, biotin carboxylase catalyzes the carboxylation of biotin on its carrier protein (BCCP) and then the CO(2) group is transferred by the carboxyltransferase to acetyl-CoA to form malonyl-CoA. The sequence is that of Acetyl-coenzyme A carboxylase carboxyl transferase subunit alpha from Helicobacter pylori (strain J99 / ATCC 700824) (Campylobacter pylori J99).